Reading from the N-terminus, the 238-residue chain is MEWRDEGALLSVRRHGESSAIIEVFTAAHGRHAGVVRGGASRKIAPILQPGAQLDLTWKARLDEHMGAFTVEPLRSRTALLGDRLGLAGLNAICAMLHVTLPEREPHSTLWQESMVLLDALDRPGWPPAYLRWEMRLLEETGFGLDLTRCAVTGSREDLAFVSPKTGRAVSSGAAGGWADRLFPLPLALLGQGPASAEEVRQGLAITGHFLGRELAPLLNGRPLPEARARLMELLARA.

This sequence belongs to the RecO family.

Functionally, involved in DNA repair and RecF pathway recombination. The sequence is that of DNA repair protein RecO from Cereibacter sphaeroides (strain ATCC 17023 / DSM 158 / JCM 6121 / CCUG 31486 / LMG 2827 / NBRC 12203 / NCIMB 8253 / ATH 2.4.1.) (Rhodobacter sphaeroides).